The primary structure comprises 494 residues: WD repeat-containing protein 37 (494 aa).

The segment at 1-38 (MPTESGSWAAARQTKQKRKSHSLSIKRTNSSEQDRPGL) is disordered. Polar residues predominate over residues 22–31 (SLSIKRTNSS). WD repeat units follow at residues 154 to 194 (GHRD…CLIK) and 197 to 236 (GHAG…PTPQ). The disordered stretch occupies residues 236–266 (QPTADTSISGEEEVDFSDKDENDGDGDASSD). Acidic residues predominate over residues 245 to 263 (GEEEVDFSDKDENDGDGDA). 5 WD repeats span residues 279 to 318 (SHQG…LVHS), 321 to 360 (GHDQ…IHSV), 365 to 403 (GHTD…SPIA), 406 to 445 (RTDS…LARL), and 452 to 493 (GHRR…LLQE).

The protein resides in the cytoplasm. It localises to the nucleus. The sequence is that of WD repeat-containing protein 37 (wdr37) from Xenopus tropicalis (Western clawed frog).